A 280-amino-acid chain; its full sequence is Vitamin B12-binding protein (280 aa).

Positions 1-27 are cleaved as a signal peptide; the sequence is MMPLGLFPLPRAAAVLLISLLTLPAQA. The 248-residue stretch at 30–277 folds into the Fe/B12 periplasmic-binding domain; the sequence is RVISLSPSTT…QMASIPTPVA (248 aa). Residue tyrosine 57 coordinates cyanocob(III)alamin. A disulfide bond links cysteine 190 and cysteine 266.

The protein belongs to the BtuF family. In terms of assembly, the complex is composed of two ATP-binding proteins (BtuD), two transmembrane proteins (BtuC) and a solute-binding protein (BtuF).

The protein localises to the periplasm. Its function is as follows. Part of the ABC transporter complex BtuCDF involved in vitamin B12 import. Binds vitamin B12 and delivers it to the periplasmic surface of BtuC. The sequence is that of Vitamin B12-binding protein from Yersinia pestis bv. Antiqua (strain Antiqua).